The sequence spans 298 residues: Ankyrin repeat domain-containing protein 29 (298 aa).

8 ANK repeats span residues 8 to 38 (PLANAVFWAARKGNLALLQLLLNSGRVDVDC), 42 to 71 (YGTTALMVASYSGHYECVRELIMQGADINL), 75 to 104 (TGSTALFFASQQGHNEIVKLLFEFGASTEF), 108 to 137 (DGGTALCAACQFGHSRVVDTLLKNGANVHD), 141 to 170 (DGATALFLASQEGHVNLIRQLLSSGAKVNQ), 174 to 203 (DGTAPLWMAAQMGHSEVVKVLLLRGADRDA), 207 to 236 (DGSTALFKAAHKGHCSVMEELLKFSPSLGI), and 239 to 268 (NGSTALHAAVMGGSLKAVDLLLKANADPAL).

This Danio rerio (Zebrafish) protein is Ankyrin repeat domain-containing protein 29 (ankrd29).